Consider the following 157-residue polypeptide: Protein-export protein SecB (157 aa).

It belongs to the SecB family. Homotetramer, a dimer of dimers. One homotetramer interacts with 1 SecA dimer.

It localises to the cytoplasm. Its function is as follows. One of the proteins required for the normal export of preproteins out of the cell cytoplasm. It is a molecular chaperone that binds to a subset of precursor proteins, maintaining them in a translocation-competent state. It also specifically binds to its receptor SecA. The sequence is that of Protein-export protein SecB from Proteus mirabilis (strain HI4320).